The following is a 676-amino-acid chain: DNA ligase (676 aa).

Residues aspartate 34–aspartate 38, serine 84–leucine 85, and glutamate 116 each bind NAD(+). Catalysis depends on lysine 118, which acts as the N6-AMP-lysine intermediate. 4 residues coordinate NAD(+): arginine 139, glutamate 174, lysine 294, and lysine 318. Zn(2+) is bound by residues cysteine 412, cysteine 415, cysteine 428, and cysteine 433. In terms of domain architecture, BRCT spans lysine 589–valine 676.

The protein belongs to the NAD-dependent DNA ligase family. LigA subfamily. Mg(2+) is required as a cofactor. Mn(2+) serves as cofactor.

It carries out the reaction NAD(+) + (deoxyribonucleotide)n-3'-hydroxyl + 5'-phospho-(deoxyribonucleotide)m = (deoxyribonucleotide)n+m + AMP + beta-nicotinamide D-nucleotide.. In terms of biological role, DNA ligase that catalyzes the formation of phosphodiester linkages between 5'-phosphoryl and 3'-hydroxyl groups in double-stranded DNA using NAD as a coenzyme and as the energy source for the reaction. It is essential for DNA replication and repair of damaged DNA. This is DNA ligase from Thermus thermophilus (strain ATCC BAA-163 / DSM 7039 / HB27).